The primary structure comprises 208 residues: Superoxide dismutase [Mn] 2 (208 aa).

The Mn(2+) site is built by His-28, His-83, Asp-165, and His-169.

Belongs to the iron/manganese superoxide dismutase family. As to quaternary structure, homodimer. Requires Mn(2+) as cofactor.

The enzyme catalyses 2 superoxide + 2 H(+) = H2O2 + O2. Its function is as follows. Destroys superoxide anion radicals which are normally produced within the cells and which are toxic to biological systems. The polypeptide is Superoxide dismutase [Mn] 2 (sodA2) (Bacillus anthracis).